Here is a 487-residue protein sequence, read N- to C-terminus: Histamine H1 receptor (487 aa).

Residues 1–29 (MSLPNSSCLLEDKMCESNKTTMASPQLMP) are Extracellular-facing. N-linked (GlcNAc...) asparagine glycans are attached at residues N5 and N18. Residues 30-50 (LVVVLSTICLVTVGLNLLVLY) traverse the membrane as a helical segment. Topologically, residues 51 to 64 (AVRSERKLHTVGNL) are cytoplasmic. A helical membrane pass occupies residues 65–89 (YIVSLSVADLIVGAVVMPMNILYLL). The Extracellular portion of the chain corresponds to 90–97 (MSKWSLGR). Residues 98 to 123 (PLCLFWLSMDYVASTASIFSVFILCI) traverse the membrane as a helical segment. Residues C100 and C180 are joined by a disulfide bond. Histamine contacts are provided by D107 and T112. The important for agonist binding stretch occupies residues 107-112 (DYVAST). Topologically, residues 124–144 (DRYRSVQQPLRYLKYRTKTRA) are cytoplasmic. 2 positions are modified to phosphothreonine: T140 and T142. Residues 145–164 (SATILGAWFLSFLWVIPILG) form a helical membrane-spanning segment. Residues 165 to 188 (WNHFMQQTSVRREDKCETDFYDVT) lie on the Extracellular side of the membrane. The helical transmembrane segment at 189 to 211 (WFKVMTAIINFYLPTLLMLWFYA) threads the bilayer. N198 contributes to the histamine binding site. Topologically, residues 212–416 (KIYKAVRQHC…MNRERKAAKQ (205 aa)) are cytoplasmic. Phosphoserine is present on S230. Residues 238-261 (KLRPENPKGDAKKPGKESPWEVLK) show a composition bias toward basic and acidic residues. The interval 238–292 (KLRPENPKGDAKKPGKESPWEVLKRKPKDAGGGSVLKSPSQTPKEMKSPVVFSQE) is disordered. Position 279 is a phosphothreonine (T279). S344 and S347 each carry phosphoserine. The interval 345-377 (EISEDQMLGDSQSFSRTDSDTTTETASGKGKLR) is disordered. Positions 353 to 370 (GDSQSFSRTDSDTTTETA) are enriched in polar residues. S380, S396, and S398 each carry phosphoserine. Residues 417–440 (LGFIMAAFILCWIPYFIFFMVIAF) traverse the membrane as a helical segment. The segment at 424-428 (FILCW) is important for agonist binding. Y431 is a binding site for histamine. A disulfide bridge links C441 with C444. Residues 441-446 (CKNCCN) lie on the Extracellular side of the membrane. Residues 447–469 (EHLHMFTIWLGYINSTLNPLIYP) traverse the membrane as a helical segment. Residues 470-487 (LCNENFKKTFKRILHIRS) lie on the Cytoplasmic side of the membrane.

This sequence belongs to the G-protein coupled receptor 1 family. Phosphorylation at sites in the second and third cytoplasmic loops independently contribute to agonist-induced receptor down-regulation.

The protein resides in the cell membrane. Functionally, G-protein-coupled receptor for histamine, a biogenic amine that functions as an immune modulator and a neurotransmitter. Through the H1 receptor, histamine mediates the contraction of smooth muscles and increases capillary permeability due to contraction of terminal venules. Also mediates neurotransmission in the central nervous system and thereby regulates circadian rhythms, emotional and locomotor activities as well as cognitive functions. The sequence is that of Histamine H1 receptor from Gorilla gorilla gorilla (Western lowland gorilla).